Here is a 134-residue protein sequence, read N- to C-terminus: Fluoride-specific ion channel FluC 3 (134 aa).

The next 4 membrane-spanning stretches (helical) occupy residues 4-24 (LIILVFVGGAFGAMCREFIML), 35-55 (MDIFVANIIAAFLLGLTTSFF), 67-87 (MVGTGIMGGLSTFSSFVFGAV), and 100-120 (ICYLVASLIVGFIAVELGLMI). Na(+)-binding residues include glycine 74 and serine 77.

It belongs to the fluoride channel Fluc/FEX (TC 1.A.43) family.

The protein localises to the cell inner membrane. It catalyses the reaction fluoride(in) = fluoride(out). Its activity is regulated as follows. Na(+) is not transported, but it plays an essential structural role and its presence is essential for fluoride channel function. Its function is as follows. Fluoride-specific ion channel. Important for reducing fluoride concentration in the cell, thus reducing its toxicity. The protein is Fluoride-specific ion channel FluC 3 of Yersinia pseudotuberculosis serotype I (strain IP32953).